The chain runs to 689 residues: Glycine--tRNA ligase beta subunit (689 aa).

The protein belongs to the class-II aminoacyl-tRNA synthetase family. Tetramer of two alpha and two beta subunits.

The protein resides in the cytoplasm. The catalysed reaction is tRNA(Gly) + glycine + ATP = glycyl-tRNA(Gly) + AMP + diphosphate. The chain is Glycine--tRNA ligase beta subunit from Actinobacillus pleuropneumoniae serotype 5b (strain L20).